A 592-amino-acid chain; its full sequence is MAVSGFTLGTCILLLHISYVANYPNGKVTQSCHGMIPEHGHSPQSVPVHDIYVSQMTFRPGDQIEVTLSGHPFKGFLLEARNAEDLNGPPIGSFTLIDSEVSQLLTCEDIQGSAVSHRSASKKTEIKVYWNAPSSAPNHTQFLVTVVEKYKIYWVKIPGPIISQPNAFPFTTPKATVVPLPTLPPVSHLTKPFSASDCGNKKFCIRSPLNCDPEKEASCVFLSFTRDDQSVMVEMSGPSKGYLSFALSHDQWMGDDDAYLCIHEDQTVYIQPSHLTGRSHPVMDSRDTLEDMAWRLADGVMQCSFRRNITLPGVKNRFDLNTSYYIFLADGAANDGRIYKHSQQPLITYEKYDVTDSPKNIGGSHSVLLLKVHGALMFVAWMTTVSIGVLVARFFKPVWSKAFLLGEAAWFQVHRMLMFTTTVLTCIAFVMPFIYRGGWSRHAGYHPYLGCIVMTLAVLQPLLAVFRPPLHDPRRQMFNWTHWSMGTAARIIAVAAMFLGMDLPGLNLPDSWKTYAMTGFVAWHVGTEVVLEVHAYRLSRKVEILDDDRIQILQSFTAVETEGHAFKKAVLAIYVCGNVTFLIIFLSAINHL.

Residues 2 to 22 form a helical membrane-spanning segment; that stretch reads AVSGFTLGTCILLLHISYVAN. Positions 13–179 constitute a Reelin domain; sequence LLLHISYVAN…FTTPKATVVP (167 aa). N-linked (GlcNAc...) asparagine glycosylation is found at Asn-138, Asn-308, and Asn-321. The region spanning 216–331 is the DOMON domain; it reads EASCVFLSFT…TSYYIFLADG (116 aa). The 200-residue stretch at 335–534 folds into the Cytochrome b561 domain; sequence DGRIYKHSQQ…VGTEVVLEVH (200 aa). The chain crosses the membrane as a helical span at residues 372-392; it reads VHGALMFVAWMTTVSIGVLVA. Heme b contacts are provided by His-373 and His-414. The next 2 helical transmembrane spans lie at 415–435 and 446–466; these read RMLM…PFIY and HPYL…LAVF. 2 residues coordinate heme b: His-446 and His-482. The next 3 membrane-spanning stretches (helical) occupy residues 491–511, 515–535, and 569–589; these read IIAV…LPDS, YAMT…EVHA, and AVLA…LSAI.

It belongs to the FRRS1 family. The cofactor is heme b.

Its subcellular location is the membrane. Functionally, ferric-chelate reductases reduce Fe(3+) to Fe(2+) before its transport from the endosome to the cytoplasm. This chain is Ferric-chelate reductase 1 (FRRS1), found in Homo sapiens (Human).